The sequence spans 188 residues: Ion-translocating oxidoreductase complex subunit B (188 aa).

The interval 1–23 (MIEAAVSMSALGLGLGLLLGVAA) is hydrophobic. A 4Fe-4S domain is found at 29–88 (ESPPIVDAIEGILPGTNCGACGYPGCRGLAEAMSEGAAPVTACAPGGRDVALALAAIVET). Positions 46, 49, 54, 71, 113, 116, 119, 123, 143, 146, 149, and 153 each coordinate [4Fe-4S] cluster. 4Fe-4S ferredoxin-type domains follow at residues 104–133 (TVAFIFEDHCTGCMRCFKRCPTDAIIGANR) and 134–163 (QIHTVVTDACIGCNACIEACPTEAIVARVK).

This sequence belongs to the 4Fe4S bacterial-type ferredoxin family. RnfB subfamily. In terms of assembly, the complex is composed of six subunits: RnfA, RnfB, RnfC, RnfD, RnfE and RnfG. The cofactor is [4Fe-4S] cluster.

Its subcellular location is the cellular chromatophore membrane. Its function is as follows. Part of a membrane-bound complex that couples electron transfer with translocation of ions across the membrane. This chain is Ion-translocating oxidoreductase complex subunit B, found in Cereibacter sphaeroides (strain ATCC 17023 / DSM 158 / JCM 6121 / CCUG 31486 / LMG 2827 / NBRC 12203 / NCIMB 8253 / ATH 2.4.1.) (Rhodobacter sphaeroides).